A 54-amino-acid chain; its full sequence is ATP synthase F(0) complex subunit 8 (54 aa).

Residues 13 to 35 traverse the membrane as a helical segment; that stretch reads ALSLWVCFPLMMLSLSSFLPLTL.

This sequence belongs to the ATPase protein 8 family. Component of the ATP synthase complex composed at least of ATP5F1A/subunit alpha, ATP5F1B/subunit beta, ATP5MC1/subunit c (homooctomer), MT-ATP6/subunit a, MT-ATP8/subunit 8, ATP5ME/subunit e, ATP5MF/subunit f, ATP5MG/subunit g, ATP5MK/subunit k, ATP5MJ/subunit j, ATP5F1C/subunit gamma, ATP5F1D/subunit delta, ATP5F1E/subunit epsilon, ATP5PF/subunit F6, ATP5PB/subunit b, ATP5PD/subunit d, ATP5PO/subunit OSCP. ATP synthase complex consists of a soluble F(1) head domain (subunits alpha(3) and beta(3)) - the catalytic core - and a membrane F(0) domain - the membrane proton channel (subunits c, a, 8, e, f, g, k and j). These two domains are linked by a central stalk (subunits gamma, delta, and epsilon) rotating inside the F1 region and a stationary peripheral stalk (subunits F6, b, d, and OSCP).

The protein localises to the mitochondrion membrane. Functionally, subunit 8, of the mitochondrial membrane ATP synthase complex (F(1)F(0) ATP synthase or Complex V) that produces ATP from ADP in the presence of a proton gradient across the membrane which is generated by electron transport complexes of the respiratory chain. ATP synthase complex consist of a soluble F(1) head domain - the catalytic core - and a membrane F(1) domain - the membrane proton channel. These two domains are linked by a central stalk rotating inside the F(1) region and a stationary peripheral stalk. During catalysis, ATP synthesis in the catalytic domain of F(1) is coupled via a rotary mechanism of the central stalk subunits to proton translocation. In vivo, can only synthesize ATP although its ATP hydrolase activity can be activated artificially in vitro. Part of the complex F(0) domain. This chain is ATP synthase F(0) complex subunit 8, found in Myxine glutinosa (Atlantic hagfish).